Consider the following 402-residue polypeptide: S-adenosylmethionine synthase (402 aa).

137 to 142 (GQGSAD) lines the ATP pocket.

This sequence belongs to the AdoMet synthase 2 family. Requires Mg(2+) as cofactor.

It carries out the reaction L-methionine + ATP + H2O = S-adenosyl-L-methionine + phosphate + diphosphate. It functions in the pathway amino-acid biosynthesis; S-adenosyl-L-methionine biosynthesis; S-adenosyl-L-methionine from L-methionine: step 1/1. In terms of biological role, catalyzes the formation of S-adenosylmethionine from methionine and ATP. The protein is S-adenosylmethionine synthase of Pyrobaculum islandicum (strain DSM 4184 / JCM 9189 / GEO3).